Reading from the N-terminus, the 278-residue chain is Elongation factor Ts (278 aa).

The interval 82–85 (TDFV) is involved in Mg(2+) ion dislocation from EF-Tu.

This sequence belongs to the EF-Ts family.

The protein localises to the cytoplasm. Associates with the EF-Tu.GDP complex and induces the exchange of GDP to GTP. It remains bound to the aminoacyl-tRNA.EF-Tu.GTP complex up to the GTP hydrolysis stage on the ribosome. The chain is Elongation factor Ts from Streptomyces griseus subsp. griseus (strain JCM 4626 / CBS 651.72 / NBRC 13350 / KCC S-0626 / ISP 5235).